The chain runs to 833 residues: AdoMet-dependent rRNA methyltransferase SPB1 (833 aa).

5 residues coordinate S-adenosyl-L-methionine: glycine 59, tryptophan 61, aspartate 79, aspartate 95, and aspartate 120. The active-site Proton acceptor is the lysine 160. Coiled-coil stretches lie at residues 348 to 389 (EEEQ…QLNM) and 453 to 481 (RDEL…SERD). The span at 477–493 (KSERDAKFRAKQARESS) shows a compositional bias: basic and acidic residues. Disordered stretches follow at residues 477 to 532 (KSER…SDDD), 592 to 645 (KRKL…EKHS), and 776 to 810 (VTKK…GKYK). Composition is skewed to acidic residues over residues 505–532 (QSDE…SDDD) and 622–634 (EDGD…DSEE). The segment covering 635–645 (EAKRTKQEKHS) has biased composition (basic and acidic residues). A coiled-coil region spans residues 730-782 (AEAKARKKHRAVARLEKLKKKAGLINDDSDKSEKDKAEEIAKLMRKVTKKAKQ).

Belongs to the class I-like SAM-binding methyltransferase superfamily. RNA methyltransferase RlmE family. SPB1 subfamily. As to quaternary structure, component of the nucleolar and nucleoplasmic pre-60S ribosomal particle.

The protein resides in the nucleus. It localises to the nucleolus. It carries out the reaction a ribonucleotide in rRNA + S-adenosyl-L-methionine = a 2'-O-methylribonucleotide in rRNA + S-adenosyl-L-homocysteine + H(+). Its function is as follows. Required for proper assembly of pre-ribosomal particles during the biogenesis of the 60S ribosomal subunit. The polypeptide is AdoMet-dependent rRNA methyltransferase SPB1 (Kluyveromyces lactis (strain ATCC 8585 / CBS 2359 / DSM 70799 / NBRC 1267 / NRRL Y-1140 / WM37) (Yeast)).